Here is a 1044-residue protein sequence, read N- to C-terminus: Sarcoplasmic/endoplasmic reticulum calcium ATPase 2 (1044 aa).

Over Met-1–Thr-48 the chain is Cytoplasmic. Position 38 is a phosphoserine (Ser-38). Residues Leu-49–Ala-69 traverse the membrane as a helical segment. Over Cys-70–Val-89 the chain is Lumenal. A helical transmembrane segment spans residues Glu-90–Arg-110. Residues Asn-111–Leu-253 are Cytoplasmic-facing. The chain crosses the membrane as a helical span at residues Asp-254–Ile-273. Residues Ile-274–Tyr-295 lie on the Lumenal side of the membrane. A 3'-nitrotyrosine mark is found at Tyr-294 and Tyr-295. A helical membrane pass occupies residues Phe-296–Ala-313. Residues Val-304, Ala-305, Ile-307, and Glu-309 each coordinate Ca(2+). The Cytoplasmic segment spans residues Val-314 to Met-756. The active-site 4-aspartylphosphate intermediate is Asp-351. Mg(2+) is bound by residues Asp-351 and Thr-353. Residue Thr-353 coordinates ATP. Position 441 is a phosphothreonine (Thr-441). ATP is bound by residues Glu-442, Arg-489, and Lys-514. Phosphoserine is present on Ser-531. Residue Arg-559 participates in ATP binding. The interval Met-575–Gly-594 is interaction with HAX1. At Ser-580 the chain carries Phosphoserine. Thr-624, Gly-625, and Asp-626 together coordinate ATP. 2 positions are modified to phosphoserine: Ser-661 and Ser-663. The ATP site is built by Arg-677 and Lys-683. Asp-702 lines the Mg(2+) pocket. Asn-705 contacts ATP. Residues Lys-757–Leu-776 traverse the membrane as a helical segment. The Ca(2+) site is built by Asn-767 and Glu-770. The Lumenal portion of the chain corresponds to Thr-777–Leu-786. The chain crosses the membrane as a helical span at residues Ile-787–Gly-807. The segment at Ile-787–Gly-807 is interaction with PLN. Residues Pro-788–Ser-1044 form an interaction with TMEM64 and PDIA3 region. Ca(2+)-binding residues include Asn-795, Thr-798, and Asp-799. Residues Phe-808–Leu-827 lie on the Cytoplasmic side of the membrane. A helical membrane pass occupies residues Ile-828 to Ala-850. The Lumenal segment spans residues Ala-851–Met-896. The cysteines at positions 875 and 887 are disulfide-linked. Residues Thr-897 to Ser-916 form a helical membrane-spanning segment. Residue Glu-907 coordinates Ca(2+). At Glu-917–Asn-929 the chain is on the cytoplasmic side. The chain crosses the membrane as a helical span at residues Ile-930–Tyr-948. The segment at Trp-931 to Leu-942 is interaction with PLN. Residues Val-949 to Leu-963 are Lumenal-facing. Residues Thr-964–Lys-984 traverse the membrane as a helical segment. Topologically, residues Phe-985–Ser-1044 are cytoplasmic.

The protein belongs to the cation transport ATPase (P-type) (TC 3.A.3) family. Type IIA subfamily. Interacts with sarcolipin (SLN); the interaction inhibits ATP2A2 Ca(2+) affinity. Interacts with phospholamban (PLN); the interaction inhibits ATP2A2 Ca(2+) affinity. Interacts with myoregulin (MRLN). Interacts with ARLN and ERLN; the interactions inhibit ATP2A2 Ca(2+) affinity. Interacts with STRIT1/DWORF; the interaction results in activation of ATP2A2. Interacts with the monomeric forms of SLN, PLN, ARLN, ERLN and STRI1/DWORF. Interacts with HAX1. Interacts with S100A8 and S100A9. Interacts with SLC35G1 and STIM1. Interacts with TMEM203. Interacts with TMEM64 and PDIA3. Interacts with TMX1. Interacts with TMX2. Interacts with VMP1; VMP1 competes with PLN and SLN to prevent them from forming an inhibitory complex with ATP2A2. Interacts with ULK1. Interacts with S100A1 in a Ca(2+)-dependent manner. Interacts with TUNAR. Interacts with FLVCR2; this interaction occurs in the absence of heme and promotes ATP2A2 proteasomal degradation; this complex is dissociated upon heme binding. Interacts with FNIP1. In terms of assembly, interacts with TRAM2 (via C-terminus). Mg(2+) is required as a cofactor. Nitrated under oxidative stress. Nitration on the two tyrosine residues inhibits catalytic activity. Post-translationally, serotonylated on Gln residues by TGM2 in response to hypoxia, leading to its inactivation. In terms of tissue distribution, isoform 2 is highly expressed in heart and slow twitch skeletal muscle. Isoform 2 is widely expressed.

It localises to the endoplasmic reticulum membrane. The protein resides in the sarcoplasmic reticulum membrane. It carries out the reaction Ca(2+)(in) + ATP + H2O = Ca(2+)(out) + ADP + phosphate + H(+). With respect to regulation, has different conformational states with differential Ca2+ affinity. The E1 conformational state (active form) shows high Ca(2+) affinity, while the E2 state exhibits low Ca(2+) affinity. Binding of ATP allosterically increases its affinity for subsequent binding of Ca2+. Reversibly inhibited by phospholamban (PLN) at low calcium concentrations. PLN inhibits ATP2A2 Ca(2+) affinity by disrupting its allosteric activation by ATP. Inhibited by sarcolipin (SLN) and myoregulin (MRLN). The inhibition is blocked by VMP1. Enhanced by STRIT1/DWORF; STRIT1 increases activity by displacing sarcolipin (SLN), phospholamban (PLN) and myoregulin (MRLN). Stabilizes SERCA2 in its E2 state. Functionally, this magnesium-dependent enzyme catalyzes the hydrolysis of ATP coupled with the translocation of calcium from the cytosol to the sarcoplasmic reticulum lumen. Involved in autophagy in response to starvation. Upon interaction with VMP1 and activation, controls ER-isolation membrane contacts for autophagosome formation. Also modulates ER contacts with lipid droplets, mitochondria and endosomes. In coordination with FLVCR2 mediates heme-stimulated switching from mitochondrial ATP synthesis to thermogenesis. Its function is as follows. Involved in the regulation of the contraction/relaxation cycle. Acts as a regulator of TNFSF11-mediated Ca(2+) signaling pathways via its interaction with TMEM64 which is critical for the TNFSF11-induced CREB1 activation and mitochondrial ROS generation necessary for proper osteoclast generation. Association between TMEM64 and SERCA2 in the ER leads to cytosolic Ca(2+) spiking for activation of NFATC1 and production of mitochondrial ROS, thereby triggering Ca(2+) signaling cascades that promote osteoclast differentiation and activation. In Mus musculus (Mouse), this protein is Sarcoplasmic/endoplasmic reticulum calcium ATPase 2.